The sequence spans 258 residues: MILDKIFEKTKEDLKERKLKLPYDMLGRSLASNPFFPKDVIKALKRVEKEVKIIAEVKKASPSKGVIREDFDPLSIALNYEKNKAAAISVLTEPHFFKGSLEYLSLIRRYTQIPLLRKDFIFDEYQILEALVYGADFVLLIAKMLSMKELKKLLEFARHLGLEALVEIHDKEDLSKAIFAGADIIGINHRNLEDFTMDMSLCEKLIPKIPNSKIIIAESGLENKEFLEYLQNLGVDAFLIGEYFMREEDEGKALKALL.

Belongs to the TrpC family.

It carries out the reaction 1-(2-carboxyphenylamino)-1-deoxy-D-ribulose 5-phosphate + H(+) = (1S,2R)-1-C-(indol-3-yl)glycerol 3-phosphate + CO2 + H2O. It participates in amino-acid biosynthesis; L-tryptophan biosynthesis; L-tryptophan from chorismate: step 4/5. This Campylobacter jejuni subsp. doylei (strain ATCC BAA-1458 / RM4099 / 269.97) protein is Indole-3-glycerol phosphate synthase.